The chain runs to 268 residues: Microtubule-associated protein RP/EB family member 1 (268 aa).

Position 2 is an N-acetylalanine (Ala2). One can recognise a Calponin-homology (CH) domain in the interval 14–116; that stretch reads NLSRHDMLAW…FVQWFKKFFD (103 aa). Lys66 bears the N6-crotonyllysine mark. Position 124 is a phosphotyrosine (Tyr124). Residues 124–268 form an interaction with MTUS2/TIP150 region; it reads YDPVAARQGQ…GGPQEEQEEY (145 aa). A disordered region spans residues 146-187; sequence LNKPKKPLTSSSAAPQRPISTQRTAAAPKAGPGVVRKNPGVG. Positions 153 to 169 are enriched in polar residues; it reads LTSSSAAPQRPISTQRT. A phosphoserine mark is found at Ser155 and Ser165. Residues 185–255 form the EB1 C-terminal domain; sequence GVGNGDDEAA…LYATDEGFVI (71 aa). The tract at residues 185–268 is interaction with CDK5RAP2; sequence GVGNGDDEAA…GGPQEEQEEY (84 aa). An interaction with APC region spans residues 206–211; it reads TVEDLE. Residues 208–268 form a DCTN1-binding region; the sequence is EDLEKERDFY…GGPQEEQEEY (61 aa). Lys220 bears the N6-acetyllysine mark. The segment at 220–242 is APC-binding; sequence KLRNIELICQENEGENDPVLQRI. Residues 232–255 are interaction with SKA1; it reads EGENDPVLQRIVDILYATDEGFVI.

Belongs to the MAPRE family. In terms of assembly, homodimer. Heterodimer with MAPRE3. Interacts with DCTN1, DCTN2, TERF1 and dynein intermediate chain. Interaction with DIAPH1 and DIAPH2. Interacts (via C-terminal residues 206-211) with APC (via C-terminal residues 2674-2843); the interaction inhibits association with and bundling of F-actin. Interacts with CLASP2, DST, KIF2C and STIM1; probably required for their targeting to the growing microtubule plus ends. Interacts with MTUS2; interaction is direct and probably targets MTUS2 to microtubules. Interacts (via C-terminus) with SKA1 (via SXIP motif); the interaction is direct and stabilizes the kinetochore-microtubule attachment of the SKA1 complex. Interacts with APC2. Interacts with CLASP1. Interacts with CDK5RAP2. Interacts with MACF1. Interacts with RABL2/RABL2A; binds preferentially to GTP-bound RABL2. Interacts with KCNAB2. Interacts (via C-terminus) with CLIP1. Interacts with SLAIN2 and SLAIN1. Interacts with KIF18B; this interaction is required for efficient accumulation of KIF18B at microtubule plus ends. Interacts with MISP. Interacts with KNSTRN. Interacts with NCKAP5L. Interacts with CAMSAP2. Interacts with PDE4DIP isoform 13/MMG8/SMYLE; this interaction is required for its recruitment to the Golgi apparatus. Forms a pericentrosomal complex with AKAP9, CDK5RAP2 and PDE4DIP isoform 13/MMG8/SMYLE; within this complex, MAPRE1 binding to CDK5RAP2 may be mediated by PDE4DIP. Interacts with AKNA. Interacts with GAS2L1, GAS2L2, and GAS2L3. Interacts with RARRES1 and AGBL2. In terms of processing, acetylation at Lys-220 by KAT2B/PCAF promotes dynamic kinetochore-microtubule interactions in early mitosis. Post-translationally, crotonylated by KAT5 during mitosis, promoting astral microtubule plasticity and dynamic connection between astral microtubules and the cortex during mitotic chromosome segregation, thereby ensuring accurate spindle positioning in mitosis. Decrotonylated by HDAC3. Ubiquitously expressed.

Its subcellular location is the cytoplasm. It localises to the cytoskeleton. The protein resides in the microtubule organizing center. It is found in the centrosome. The protein localises to the golgi apparatus. Its subcellular location is the spindle. It localises to the spindle pole. Its function is as follows. Plus-end tracking protein (+TIP) that binds to the plus-end of microtubules and regulates the dynamics of the microtubule cytoskeleton. Recruits other +TIP proteins to microtubules by binding to a conserved Ser-X-Leu-Pro (SXLP) motif in their polypeptide chains. Promotes cytoplasmic microtubule nucleation and elongation. Involved in mitotic spindle positioning by stabilizing microtubules and promoting dynamic connection between astral microtubules and the cortex during mitotic chromosome segregation. Assists chromosome alignment in metaphase by recruiting the SKA complex to the spindle and stabilizing its interactions with microtubule bundles (K-fibers). Also acts as a regulator of minus-end microtubule organization: interacts with the complex formed by AKAP9 and PDE4DIP, leading to recruit CAMSAP2 to the Golgi apparatus, thereby tethering non-centrosomal minus-end microtubules to the Golgi, an important step for polarized cell movement. Promotes elongation of CAMSAP2-decorated microtubule stretches on the minus-end of microtubules. Acts as a regulator of autophagosome transport via interaction with CAMSAP2. Functions downstream of Rho GTPases and DIAPH1 in stable microtubule formation. May play a role in cell migration. The protein is Microtubule-associated protein RP/EB family member 1 of Homo sapiens (Human).